Reading from the N-terminus, the 336-residue chain is Anthranilate phosphoribosyltransferase (336 aa).

Residues G80, 83-84 (GD), T88, 90-93 (NIST), 108-116 (KHGNRSITS), and S120 each bind 5-phospho-alpha-D-ribose 1-diphosphate. G80 serves as a coordination point for anthranilate. S92 serves as a coordination point for Mg(2+). Residue N111 participates in anthranilate binding. Position 166 (R166) interacts with anthranilate. Residues D224 and E225 each coordinate Mg(2+).

This sequence belongs to the anthranilate phosphoribosyltransferase family. In terms of assembly, homodimer. Mg(2+) is required as a cofactor.

It carries out the reaction N-(5-phospho-beta-D-ribosyl)anthranilate + diphosphate = 5-phospho-alpha-D-ribose 1-diphosphate + anthranilate. Its pathway is amino-acid biosynthesis; L-tryptophan biosynthesis; L-tryptophan from chorismate: step 2/5. Catalyzes the transfer of the phosphoribosyl group of 5-phosphorylribose-1-pyrophosphate (PRPP) to anthranilate to yield N-(5'-phosphoribosyl)-anthranilate (PRA). The protein is Anthranilate phosphoribosyltransferase of Caldicellulosiruptor saccharolyticus (strain ATCC 43494 / DSM 8903 / Tp8T 6331).